Reading from the N-terminus, the 124-residue chain is Small ribosomal subunit protein eS25 (124 aa).

Positions 1–22 are enriched in basic and acidic residues; it reads MPPKDSKQKKDTSKAKKDKDPV. The tract at residues 1 to 37 is disordered; it reads MPPKDSKQKKDTSKAKKDKDPVNKSGGKAKKKKWSKG. The span at 27-37 shows a compositional bias: basic residues; it reads GKAKKKKWSKG.

It belongs to the eukaryotic ribosomal protein eS25 family. Component of the small ribosomal subunit.

The protein resides in the cytoplasm. Component of the small ribosomal subunit. The ribosome is a large ribonucleoprotein complex responsible for the synthesis of proteins in the cell. In Ictalurus punctatus (Channel catfish), this protein is Small ribosomal subunit protein eS25 (rps25).